We begin with the raw amino-acid sequence, 312 residues long: Olfactory receptor 7D4 (312 aa).

At 1 to 25 the chain is on the extracellular side; that stretch reads MEAENLTELSKFLLLGLSDDPELQP. A glycan (N-linked (GlcNAc...) asparagine) is linked at Asn-5. The chain crosses the membrane as a helical span at residues 26-46; that stretch reads VLFGLFLSMYLVTVLGNLLII. Residues 47 to 54 are Cytoplasmic-facing; that stretch reads LAVSSDSH. Residues 55–75 form a helical membrane-spanning segment; the sequence is LHTPMYFFLSNLSFVDICFIS. The Extracellular segment spans residues 76–99; that stretch reads TTVPKMLVSIQARSKDISYMGCLT. Cys-97 and Cys-189 are disulfide-bonded. Residues 100 to 120 traverse the membrane as a helical segment; it reads QVYFLMMFAGMDTFLLAVMAY. At 121-139 the chain is on the cytoplasmic side; that stretch reads DRFVAICHPLHYTVIMNPC. The chain crosses the membrane as a helical span at residues 140–160; that stretch reads LCGLLVLASWFIIFWFSLVHI. Residues 161–197 lie on the Extracellular side of the membrane; the sequence is LLMKRLTFSTGTEIPHFFCEPAQVLKVACSNTLLNNI. Residues 198–217 form a helical membrane-spanning segment; sequence VLYVATALLGVFPVAGILFS. Residues 218–237 lie on the Cytoplasmic side of the membrane; it reads YSQIVSSLMGMSSTKGKYKA. A helical membrane pass occupies residues 238–258; sequence FSTCGSHLCVVSLFYGTGLGV. Residues 259 to 271 lie on the Extracellular side of the membrane; the sequence is YLSSAVTHSSQSS. The chain crosses the membrane as a helical span at residues 272–292; that stretch reads STASVMYAMVTPMLNPFIYSL. At 293-312 the chain is on the cytoplasmic side; it reads RNKDVKGALERLLSRADSCP.

This sequence belongs to the G-protein coupled receptor 1 family. In terms of tissue distribution, nasal olfactory epithelium.

Its subcellular location is the cell membrane. In terms of biological role, odorant receptor. Selectively activated by androstenone and the related odorous steroid androstadienone. The polypeptide is Olfactory receptor 7D4 (OR7D4) (Homo sapiens (Human)).